Here is a 106-residue protein sequence, read N- to C-terminus: MKNDIAIMADPDTVTGFMLGGIKSGFPVHNKEEAKTTLKQLVDDEYSIIITTEKIGDELRDDITKYTGSKALPMIIEVPDKSGSHKRETDPMNDLIKRVIGVEMVK.

The protein belongs to the V-ATPase F subunit family. As to quaternary structure, has multiple subunits with at least A(3), B(3), C, D, E, F, H, I and proteolipid K(x).

The protein localises to the cell membrane. Its function is as follows. Component of the A-type ATP synthase that produces ATP from ADP in the presence of a proton gradient across the membrane. The protein is A-type ATP synthase subunit F of Methanosphaera stadtmanae (strain ATCC 43021 / DSM 3091 / JCM 11832 / MCB-3).